The chain runs to 255 residues: Lactose phosphotransferase system repressor (255 aa).

Positions 3 to 58 (KKRRLEKILDMLKIDGTITIKEIIDELDISDMTARRDLDALEADGLLTRTHGGAQL) constitute an HTH deoR-type domain. Positions 20-39 (ITIKEIIDELDISDMTARRD) form a DNA-binding region, H-T-H motif.

In terms of biological role, repressor of the lactose catabolism operon. Galactose-6-phosphate is the inducer. This Lactococcus lactis subsp. lactis (Streptococcus lactis) protein is Lactose phosphotransferase system repressor (lacR).